A 181-amino-acid chain; its full sequence is Immunity-related GTPase family M protein (181 aa).

The IRG-type G domain maps to 32–181; it reads TPVNITMAGD…NLQKERVCEY (150 aa). Residues 41-48, 66-70, and 147-149 contribute to the GTP site; these read DSGNGMST, TELVK, and KLD.

The protein belongs to the TRAFAC class dynamin-like GTPase superfamily. IRG family. In terms of assembly, interacts with ULK1; promoting the coassembly of ULK1 and BECN1. Interacts with BECN1; enhancing BECN1-interacting partners and influencing the composition of the BECN1 complex. Interacts with ATG16L1. Interacts with NOD2; promoting IRGM 'Lys-63'-linked polyubiquitination, which is required for interactions with the core autophagy factors. Interacts with STX17; promoting STX17 recruitment to autophagosomes. Interacts with ATG8 proteins (GABARAP, GABARAPL1, GABARAPL2, MAP1LC3A, MAP1LC3B and MAP1LC3C); promoting STX17 recruitment to autophagosomes. Interacts with TFEB; promoting association between TFEB and PPP3CB and TFEB dephosphorylation. Interacts with PPP3CB; promoting association between TFEB and PPP3CB and TFEB dephosphorylation. Interacts with NLRP3; preventing NLRP3 inflammasome assembly and promoting SQSTM1/p62-dependent autophagic degradation of NLRP3. Interacts with CGAS; promoting SQSTM1/p62-dependent autophagic degradation of CGAS. Interacts with RIGI/RIG-I; promoting SQSTM1/p62-dependent autophagic degradation of RIGI/RIG-I. Interacts with NOD1; promoting SQSTM1/p62-dependent autophagic degradation of RIGI/RIG-I. Interacts with NOD2; promoting SQSTM1/p62-dependent autophagic degradation of RIGI/RIG-I. Interacts with RIPK2; promoting SQSTM1/p62-dependent autophagic degradation of RIGI/RIG-I. In terms of processing, ubiquitinated via 'Lys-63'-linked polyubiquitination in a NOD2-dependent process. 'Lys-63'-linked polyubiquitination is required for interactions with the core autophagy factors. In terms of tissue distribution, widely expressed (at protein level). Expressed in several tissues including colon, small bowel and peripheral blood leukocytes.

Its subcellular location is the golgi apparatus membrane. The protein resides in the cell membrane. It localises to the cytoplasmic vesicle. It is found in the phagosome membrane. The protein localises to the autophagosome membrane. Its subcellular location is the lysosome membrane. The protein resides in the late endosome membrane. It localises to the mitochondrion membrane. It is found in the cell projection. The protein localises to the phagocytic cup. Its subcellular location is the mitochondrion. The enzyme catalyses GTP + H2O = GDP + phosphate + H(+). Functionally, immunity-related GTPase that plays important roles in innate immunity and inflammatory response. Acts as a dynamin-like protein that binds to intracellular membranes and promotes remodeling and trafficking of those membranes. Required for clearance of acute protozoan and bacterial infections by interacting with autophagy and lysosome regulatory proteins, thereby promoting the fusion of phagosomes with lysosomes for efficient degradation of cargo including microbes. Regulates selective autophagy, including xenophagy and mitophagy, both directly and indirectly. Directly regulates autophagy by acting as a molecular adapter that promotes the coassembly of the core autophagy machinery to mediate antimicrobial defense: IRGM (1) activates AMPK, which in turn phosphorylates ULK1 and BECN1 to induce autophagy, (2) promotes the coassembly of ULK1 and BECN1, enhancing BECN1-interacting partners and (3) influences the composition of the BECN1 complex, by competing with the negative regulators BCL2 and RUBCN, to trigger autophagy. Also activates autophagy by promoting recruitment of STX17 to autophagosomes. In collaboration with ATG8 proteins, regulate lysosomal biogenesis, a fundamental process for any autophagic pathway, by promoting TFEB dephosphorylation. Also modulates autophagy by assisting with autophagosome formation and preventing lysosomal deacidification. While activating autophagy, acts as a key negative regulator of the inflammatory and interferon responses both by (1) promoting mitophagy and (2) mediating autophagy-dependent degradation of effectors of the inflammatory response. Promotes degradation of damaged and IFNG/IFN-gamma-stressed mitochondria via mitophagy, preventing cytosolic release of ligands that activate inflammation. Acts as a suppressor of inflammation by promoting recruitment of inflammation effectors, such as CGAS, RIGI/RIG-I and NLRP3, to autophagosome membranes, leading to their SQSTM1/p62-dependent autophagic degradation. Also directly inhibits assembly of the NLRP3 inflammasome by preventing the association between NLRP3 and PYCARD. Acts as a negative regulator of antiviral innate immune response by suppressing the RIPK2-dependent pro-inflammatory response: mediates recruitment of RIPosomes, composed of RIPK2 and NOD1 or NOD2, to autophagosome membranes, promoting their SQSTM1/p62-dependent autophagic degradation. Its function is as follows. Acts as a positive regulator of mitophagy in response to intracellular mycobacteria infection: specifically binds cardiolipin, leading to its translocation to mitochondria, where it promotes affected mitochondrial fission and mitophagy. (Microbial infection) Following infection by hepatitis C virus (HCV), promotes HCV-triggered membrane remodeling, leading to autophagy and Golgi fragmentation, a step required for HCV replication. In Homo sapiens (Human), this protein is Immunity-related GTPase family M protein.